We begin with the raw amino-acid sequence, 344 residues long: Cinnamoyl-CoA reductase 1 (344 aa).

Ser-7 is subject to Phosphoserine. NADP(+) contacts are provided by residues 17–23 (GAGGYIA), Arg-42, Lys-48, 68–69 (DL), 88–90 (TAS), Tyr-161, Lys-165, 188–191 (PVLV), and Ser-203. Cys-154 and Cys-162 are joined by a disulfide. The Proton donor role is filled by Lys-165. Residues 317–344 (QEKGHLAPPPPPPSASQESVENGIKIGS) form a disordered region.

The protein belongs to the NAD(P)-dependent epimerase/dehydratase family. Dihydroflavonol-4-reductase subfamily. Expressed in leaves, stems and flowers.

It carries out the reaction (E)-cinnamaldehyde + NADP(+) + CoA = (E)-cinnamoyl-CoA + NADPH + H(+). The protein operates within aromatic compound metabolism; phenylpropanoid biosynthesis. Involved in the latter stages of lignin biosynthesis. Catalyzes one of the last steps of monolignol biosynthesis, the conversion of cinnamoyl-CoAs into their corresponding cinnamaldehydes. This chain is Cinnamoyl-CoA reductase 1, found in Arabidopsis thaliana (Mouse-ear cress).